The sequence spans 346 residues: Phosphoribosylformylglycinamidine cyclo-ligase (346 aa).

The protein belongs to the AIR synthase family.

It localises to the cytoplasm. It catalyses the reaction 2-formamido-N(1)-(5-O-phospho-beta-D-ribosyl)acetamidine + ATP = 5-amino-1-(5-phospho-beta-D-ribosyl)imidazole + ADP + phosphate + H(+). It functions in the pathway purine metabolism; IMP biosynthesis via de novo pathway; 5-amino-1-(5-phospho-D-ribosyl)imidazole from N(2)-formyl-N(1)-(5-phospho-D-ribosyl)glycinamide: step 2/2. This chain is Phosphoribosylformylglycinamidine cyclo-ligase, found in Photorhabdus laumondii subsp. laumondii (strain DSM 15139 / CIP 105565 / TT01) (Photorhabdus luminescens subsp. laumondii).